Here is an 89-residue protein sequence, read N- to C-terminus: Small ribosomal subunit protein uS15 (89 aa).

The protein belongs to the universal ribosomal protein uS15 family. Part of the 30S ribosomal subunit. Forms a bridge to the 50S subunit in the 70S ribosome, contacting the 23S rRNA.

In terms of biological role, one of the primary rRNA binding proteins, it binds directly to 16S rRNA where it helps nucleate assembly of the platform of the 30S subunit by binding and bridging several RNA helices of the 16S rRNA. Functionally, forms an intersubunit bridge (bridge B4) with the 23S rRNA of the 50S subunit in the ribosome. This chain is Small ribosomal subunit protein uS15, found in Streptococcus pyogenes serotype M2 (strain MGAS10270).